Here is a 63-residue protein sequence, read N- to C-terminus: Large ribosomal subunit protein uL29 (63 aa).

The protein belongs to the universal ribosomal protein uL29 family.

This Herminiimonas arsenicoxydans protein is Large ribosomal subunit protein uL29.